A 497-amino-acid chain; its full sequence is Intermediate filament protein A (497 aa).

Residues 1 to 32 form a coil 1A region; it reads MSDLNDRLASYIEKVRFLEAQNRKLAADLDLL. Positions 1–342 constitute an IF rod domain; the sequence is MSDLNDRLAS…KMLEGEENRA (342 aa). Positions 33–46 are linker 1; the sequence is RGRWGKDTLSVRAM. Positions 47 to 184 are coil 1B; that stretch reads YEGELQEARK…RVHDQEIAEL (138 aa). The interval 185 to 202 is linker 12; it reads QAMASRDTTPENREYFKN. The tract at residues 203 to 342 is coil 2; that stretch reads ELASAIRDIR…KMLEGEENRA (140 aa). The tail stretch occupies residues 343-497; that stretch reads GLRQLVEQVV…THIQRSSHTI (155 aa). The LTD domain maps to 375–493; that stretch reads SRTSFQRSAK…EERATHIQRS (119 aa).

The protein belongs to the intermediate filament family. As to quaternary structure, a and B can form homopolymers. As to expression, giant body muscle cells.

Its subcellular location is the cytoplasm. The polypeptide is Intermediate filament protein A (Ascaris suum (Pig roundworm)).